Reading from the N-terminus, the 275-residue chain is 2,3,4,5-tetrahydropyridine-2,6-dicarboxylate N-succinyltransferase (275 aa).

Positions 107 and 144 each coordinate substrate.

The protein belongs to the transferase hexapeptide repeat family. As to quaternary structure, homotrimer.

It localises to the cytoplasm. The catalysed reaction is (S)-2,3,4,5-tetrahydrodipicolinate + succinyl-CoA + H2O = (S)-2-succinylamino-6-oxoheptanedioate + CoA. The protein operates within amino-acid biosynthesis; L-lysine biosynthesis via DAP pathway; LL-2,6-diaminopimelate from (S)-tetrahydrodipicolinate (succinylase route): step 1/3. The chain is 2,3,4,5-tetrahydropyridine-2,6-dicarboxylate N-succinyltransferase from Polynucleobacter asymbioticus (strain DSM 18221 / CIP 109841 / QLW-P1DMWA-1) (Polynucleobacter necessarius subsp. asymbioticus).